A 248-amino-acid chain; its full sequence is MALLEICCYSMECALTAQRNGADRIELCAAPKEGGLTPSLGVLRSVREHITIPVHPIIRPRGGDFYYTDGEFAAMLEDIRLVRELGFPGLVTGVLTVDGDVDMSRMEKIMAAAGPLAVTFHRAFDMCANPFNALKNLADAGVSRVLTSGQKADAAQGLSIIMELIAQGDAPIIMAGAGVRANNLQNFLDAGVREVHSSAGVLLPSPMRYRNQGLSMSADIQADEYSRYRVEGAAVAEMKGIIVRHQAK.

It belongs to the CutC family. In terms of assembly, homodimer.

It localises to the cytoplasm. The sequence is that of PF03932 family protein CutC from Salmonella schwarzengrund (strain CVM19633).